The following is a 399-amino-acid chain: Bombesin receptor subtype-3 (399 aa).

Positions 1–31 (MSQRQPQSPNQTLISTTNDTESSSSVVPNDS) are enriched in polar residues. Positions 1-38 (MSQRQPQSPNQTLISTTNDTESSSSVVPNDSTNKRRTG) are disordered. Residues 1 to 41 (MSQRQPQSPNQTLISTTNDTESSSSVVPNDSTNKRRTGDNS) are Extracellular-facing. N-linked (GlcNAc...) asparagine glycosylation is found at Asn-10, Asn-18, and Asn-29. A helical transmembrane segment spans residues 42–63 (PGIEALCAIYITYAVIISVGIL). Residues 64-82 (GNAILIKVFFKTKSMQTVP) lie on the Cytoplasmic side of the membrane. The chain crosses the membrane as a helical span at residues 83 to 103 (NIFITSLAFGDLLLLLTCVPV). Residues 104-121 (DVTHYLAEGWLFGRIGCK) lie on the Extracellular side of the membrane. The cysteines at positions 120 and 203 are disulfide-linked. The chain crosses the membrane as a helical span at residues 122-143 (VLSFIRLTSVGVSVFTLTILSA). Residues 144 to 163 (DRYKAVVKPLERQPPNAILK) lie on the Cytoplasmic side of the membrane. A helical transmembrane segment spans residues 164–184 (TCAKAGCIWIMSMIIALPEAI). Residues 185–220 (FSNVYTFQDPDKNVTFKACASYPVSERLLQEIHSLL) lie on the Extracellular side of the membrane. A helical transmembrane segment spans residues 221–241 (CFLVFYIIPLSIISVYYSLIA). Over 242 to 272 (RTLYKSTLNIPTEEQRHARKQIESRKRIAKT) the chain is Cytoplasmic. A helical transmembrane segment spans residues 273-293 (VLVLVALFALCWLPNHLLYLY). The Extracellular portion of the chain corresponds to 294 to 313 (RSFTSQTYMDSSTVHLFVTI). Residues 314-333 (ISRILAFSNSCVNPFALYWL) traverse the membrane as a helical segment. At 334-399 (SNTFQQHFKA…CSVKKEDDRV (66 aa)) the chain is on the cytoplasmic side.

Belongs to the G-protein coupled receptor 1 family. As to quaternary structure, interacts with C6orf89.

Its subcellular location is the cell membrane. Functionally, role in sperm cell division, maturation, or function. This receptor mediates its action by association with G proteins that activate a phosphatidylinositol-calcium second messenger system. The chain is Bombesin receptor subtype-3 (BRS3) from Ovis aries (Sheep).